The sequence spans 555 residues: 6-phosphofructo-2-kinase/fructose-2,6-bisphosphatase 3 (555 aa).

The segment at 1–245 (MPLELTQSRV…VYYLMNIHVQ (245 aa)) is 6-phosphofructo-2-kinase. An ATP-binding site is contributed by 42–50 (GLPARGKTY). The beta-D-fructose 6-phosphate site is built by Arg75 and Arg99. Asp125 is a catalytic residue. Residues Thr127 and Arg133 each coordinate beta-D-fructose 6-phosphate. The active site involves Cys155. 164–169 (NIMEVK) is a binding site for ATP. Residues Lys169, Arg190, and Tyr194 each contribute to the beta-D-fructose 6-phosphate site. Residues 246-555 (PRTIYLCRHG…CHIFSKFSPY (310 aa)) are fructose-2,6-bisphosphatase. Arg253 serves as a coordination point for beta-D-fructose 2,6-bisphosphate. Residue His254 is the Tele-phosphohistidine intermediate of the active site. Positions 260 and 266 each coordinate beta-D-fructose 2,6-bisphosphate. Glu323 functions as the Proton donor/acceptor in the catalytic mechanism. Residues Tyr334, Arg348, Lys352, Tyr363, Gln389, and Arg393 each contribute to the beta-D-fructose 2,6-bisphosphate site. Position 345–348 (345–348 (YALR)) interacts with ATP. ATP is bound by residues 389–393 (QAVLR) and Tyr425. A disordered region spans residues 475–504 (KQDAKKGPNPLMRRNSVTPLASPEPTKKPR). Phosphoserine; by AMPK and PKA is present on Ser490. A Phosphothreonine modification is found at Thr492. Ser496 bears the Phosphoserine mark.

The protein in the C-terminal section; belongs to the phosphoglycerate mutase family. In terms of assembly, homodimer. Forms a heterodimer with PFKFB2. Post-translationally, phosphorylation by AMPK stimulates activity.

The enzyme catalyses beta-D-fructose 2,6-bisphosphate + H2O = beta-D-fructose 6-phosphate + phosphate. It catalyses the reaction beta-D-fructose 6-phosphate + ATP = beta-D-fructose 2,6-bisphosphate + ADP + H(+). Functionally, catalyzes both the synthesis and degradation of fructose 2,6-bisphosphate. The polypeptide is 6-phosphofructo-2-kinase/fructose-2,6-bisphosphatase 3 (Pfkfb3) (Rattus norvegicus (Rat)).